A 230-amino-acid polypeptide reads, in one-letter code: C-methyltransferase CouO (230 aa).

Belongs to the methyltransferase superfamily.

It functions in the pathway antibiotic biosynthesis. Mediates C-methylation at the 8-position of the aminocoumarin moieties in coumermycin A1 in the biosynthetic pathway of coumermycin antibiotic. Active on both mono- and bis-amides for mono- and di-C-methylation adjacent to the phenolic hydroxyl before it is glycosylated by CouM. The sequence is that of C-methyltransferase CouO (couO) from Streptomyces rishiriensis.